Consider the following 245-residue polypeptide: Flavin-dependent thymidylate synthase (245 aa).

The ThyX domain occupies 5–210; sequence IKVRLVNYTK…ELRPIIRWAK (206 aa). FAD-binding positions include serine 59, 83–85, and glutamine 91; that span reads RHR. Residues 80–83, 91–95, and arginine 149 each bind dUMP; these read QLVR and QQSMR. Positions 83-93 match the ThyX motif motif; the sequence is RHRIASYTQQS. FAD-binding positions include 165-167 and histidine 171; that span reads NLR. Position 176 (arginine 176) interacts with dUMP. Arginine 176 (involved in ionization of N3 of dUMP, leading to its activation) is an active-site residue.

The protein belongs to the thymidylate synthase ThyX family. As to quaternary structure, homotetramer. FAD is required as a cofactor.

It carries out the reaction dUMP + (6R)-5,10-methylene-5,6,7,8-tetrahydrofolate + NADPH + H(+) = dTMP + (6S)-5,6,7,8-tetrahydrofolate + NADP(+). It participates in pyrimidine metabolism; dTTP biosynthesis. Catalyzes the reductive methylation of 2'-deoxyuridine-5'-monophosphate (dUMP) to 2'-deoxythymidine-5'-monophosphate (dTMP) while utilizing 5,10-methylenetetrahydrofolate (mTHF) as the methyl donor, and NADPH and FADH(2) as the reductant. This Thermococcus onnurineus (strain NA1) protein is Flavin-dependent thymidylate synthase.